The following is a 401-amino-acid chain: Argininosuccinate synthase (401 aa).

9-17 (AYSGGLDTS) serves as a coordination point for ATP. Tyrosine 86 lines the L-citrulline pocket. An ATP-binding site is contributed by glycine 116. Positions 118, 122, and 123 each coordinate L-aspartate. Asparagine 122 contacts L-citrulline. Residues arginine 126, serine 174, serine 183, glutamate 259, and tyrosine 271 each contribute to the L-citrulline site.

This sequence belongs to the argininosuccinate synthase family. Type 1 subfamily. Homotetramer.

Its subcellular location is the cytoplasm. It catalyses the reaction L-citrulline + L-aspartate + ATP = 2-(N(omega)-L-arginino)succinate + AMP + diphosphate + H(+). It functions in the pathway amino-acid biosynthesis; L-arginine biosynthesis; L-arginine from L-ornithine and carbamoyl phosphate: step 2/3. This chain is Argininosuccinate synthase, found in Bacillus anthracis (strain A0248).